We begin with the raw amino-acid sequence, 413 residues long: NADPH dehydrogenase afvA (413 aa).

Residue alanine 53 to cysteine 56 coordinates FMN. Substrate is bound at residue tyrosine 58. Positions 88 and 130 each coordinate FMN. Histidine 211 to histidine 214 is a binding site for substrate. FMN contacts are provided by residues arginine 264 and glycine 370 to arginine 371.

The protein belongs to the NADH:flavin oxidoreductase/NADH oxidase family. NamA subfamily. It depends on FMN as a cofactor.

The enzyme catalyses A + NADPH + H(+) = AH2 + NADP(+). The protein operates within secondary metabolite biosynthesis. In terms of biological role, NADPH dehydrogenase; part of the gene cluster that mediates the biosynthesis of aflavarin, a bicoumarin that exhibits anti-insectan activity against the fungivorous beetle C.hemipterus. The chain is NADPH dehydrogenase afvA from Aspergillus flavus (strain ATCC 200026 / FGSC A1120 / IAM 13836 / NRRL 3357 / JCM 12722 / SRRC 167).